Here is a 214-residue protein sequence, read N- to C-terminus: tRNA (guanine-N(7)-)-methyltransferase (214 aa).

Positions 43, 68, 95, and 117 each coordinate S-adenosyl-L-methionine. D117 is a catalytic residue. Residues K121, D153, and 190–193 (TEYE) contribute to the substrate site.

Belongs to the class I-like SAM-binding methyltransferase superfamily. TrmB family.

The catalysed reaction is guanosine(46) in tRNA + S-adenosyl-L-methionine = N(7)-methylguanosine(46) in tRNA + S-adenosyl-L-homocysteine. Its pathway is tRNA modification; N(7)-methylguanine-tRNA biosynthesis. In terms of biological role, catalyzes the formation of N(7)-methylguanine at position 46 (m7G46) in tRNA. This chain is tRNA (guanine-N(7)-)-methyltransferase, found in Staphylococcus aureus (strain COL).